A 72-amino-acid chain; its full sequence is Large ribosomal subunit protein bL31 (72 aa).

The protein belongs to the bacterial ribosomal protein bL31 family. Type A subfamily. In terms of assembly, part of the 50S ribosomal subunit.

In terms of biological role, binds the 23S rRNA. This chain is Large ribosomal subunit protein bL31, found in Deinococcus deserti (strain DSM 17065 / CIP 109153 / LMG 22923 / VCD115).